The chain runs to 182 residues: ATP synthase subunit delta (182 aa).

It belongs to the ATPase delta chain family. As to quaternary structure, F-type ATPases have 2 components, F(1) - the catalytic core - and F(0) - the membrane proton channel. F(1) has five subunits: alpha(3), beta(3), gamma(1), delta(1), epsilon(1). CF(0) has four main subunits: a(1), b(1), b'(1) and c(10-14). The alpha and beta chains form an alternating ring which encloses part of the gamma chain. F(1) is attached to F(0) by a central stalk formed by the gamma and epsilon chains, while a peripheral stalk is formed by the delta, b and b' chains.

It is found in the cellular thylakoid membrane. F(1)F(0) ATP synthase produces ATP from ADP in the presence of a proton or sodium gradient. F-type ATPases consist of two structural domains, F(1) containing the extramembraneous catalytic core and F(0) containing the membrane proton channel, linked together by a central stalk and a peripheral stalk. During catalysis, ATP synthesis in the catalytic domain of F(1) is coupled via a rotary mechanism of the central stalk subunits to proton translocation. Functionally, this protein is part of the stalk that links CF(0) to CF(1). It either transmits conformational changes from CF(0) to CF(1) or is implicated in proton conduction. In Microcystis aeruginosa (strain NIES-843 / IAM M-2473), this protein is ATP synthase subunit delta.